We begin with the raw amino-acid sequence, 96 residues long: Small ribosomal subunit protein bS6 (96 aa).

It belongs to the bacterial ribosomal protein bS6 family.

Binds together with bS18 to 16S ribosomal RNA. The chain is Small ribosomal subunit protein bS6 from Synechococcus sp. (strain JA-2-3B'a(2-13)) (Cyanobacteria bacterium Yellowstone B-Prime).